The chain runs to 187 residues: Threonylcarbamoyl-AMP synthase (187 aa).

A YrdC-like domain is found at 4-187 (TLTLSEAVTA…DARSGHILRL (184 aa)).

It belongs to the SUA5 family. TsaC subfamily.

It is found in the cytoplasm. The catalysed reaction is L-threonine + hydrogencarbonate + ATP = L-threonylcarbamoyladenylate + diphosphate + H2O. Required for the formation of a threonylcarbamoyl group on adenosine at position 37 (t(6)A37) in tRNAs that read codons beginning with adenine. Catalyzes the conversion of L-threonine, HCO(3)(-)/CO(2) and ATP to give threonylcarbamoyl-AMP (TC-AMP) as the acyladenylate intermediate, with the release of diphosphate. This chain is Threonylcarbamoyl-AMP synthase, found in Xylella fastidiosa (strain M23).